Consider the following 317-residue polypeptide: MIMRFGYVSHAMALWDCSPAKTMTFTSFQKLSKQEREDKLYDVTRQNLEHTIRILHYNIAHEIPLYRLSSSIVPLATHPEVEFDYIGLFTPLWRKIGALIKEHNLRVSFHPNQFTLFTSDKPHITTNAITDMTYHYKVLDAIGIADSSYINIHVGGAYGNKEKAVERFHENIKKLPAHIKRQMTLENDDKTYTTAETLSICQKEKIPFVFDYHHHMANLCEEPLEELLPAIFETWAHTNILPKVHISSPKSKKEFRAHAEYIDLEFIKPFLHVAKKVNHNFDIMIESKQKDLAMLQFIHELSAIRGIKRINSSTLQW.

Belongs to the uve1/UvsE family.

Component in a DNA repair pathway. Removal of UV LIGHT damaged nucleotides. Recognizes pyrimidine dimers and cleave a phosphodiester bond immediately 5' to the lesion. The protein is UV DNA damage endonuclease of Bacillus cereus (strain ATCC 10987 / NRS 248).